The chain runs to 342 residues: tRNA N6-adenosine threonylcarbamoyltransferase (342 aa).

Residues histidine 111 and histidine 115 each contribute to the Fe cation site. Substrate-binding positions include 133–137, aspartate 166, glycine 179, aspartate 183, and asparagine 272; that span reads AVSGG. Aspartate 300 serves as a coordination point for Fe cation.

The protein belongs to the KAE1 / TsaD family. It depends on Fe(2+) as a cofactor.

It localises to the cytoplasm. It carries out the reaction L-threonylcarbamoyladenylate + adenosine(37) in tRNA = N(6)-L-threonylcarbamoyladenosine(37) in tRNA + AMP + H(+). Its function is as follows. Required for the formation of a threonylcarbamoyl group on adenosine at position 37 (t(6)A37) in tRNAs that read codons beginning with adenine. Is involved in the transfer of the threonylcarbamoyl moiety of threonylcarbamoyl-AMP (TC-AMP) to the N6 group of A37, together with TsaE and TsaB. TsaD likely plays a direct catalytic role in this reaction. This is tRNA N6-adenosine threonylcarbamoyltransferase from Geobacter sp. (strain M21).